Here is a 1108-residue protein sequence, read N- to C-terminus: MFLGLGRFSRLVLWFAAFRKLLGHHGLASAKFLWCLCLLSVMSLPQQVWTLPYKIGVVGPWACDSLFSKALPEVAARLAIERINRDPSFDLSYSFEYVILNEDCQTSRALSSFISHHQMASGFIGPTNPGYCEAASLLGNSWDKGIFSWACVNYELDNKISYPTFSRTLPSPIRVLVTVMKYFQWAHAGVISSDEDIWVHTANRVASALRSHGLPVGVVLTTGQDSQSMRKALQRIHQADRIRIIIMCMHSALIGGETQMHLLECAHDLKMTDGTYVFVPYDALLYSLPYKHTPYRVLRNNPKLREAYDAVLTITVESQEKTFYQAFTEAAARGEIPEKLEFDQVSPLFGTIYNSIYFIAQAMNNAMKENGQAGAASLVQHSRNMQFHGFNQLMRTDSNGNGISEYVILDTNLKEWELHSTYTVDMEMELLRFGGTPIHFPGGRPPRADAKCWFAEGKICHGGIDPAFAMMVCLTLLIALLSINGFAYFIRRRINKIQLIKGPNRILLTLEDVTFINPHFGSKRGSRASVSFQITSEVQSGRSPRLSFSSGSLTPATYENSNIAIYEGDWVWLKKFSLGDFGDLKSIKSRASDVFEMMKDLRHENINPLLGFFYDSGMFAIVTEFCSRGSLEDILTNQDVKLDWMFKSSLLLDLIKGMKYLHHREFVHGRLKSRNCVVDGRFVLKVTDYGFNDILEMLRLSEEESSMEELLWTAPELLRAPRGSRLGSFAGDVYSFAIIMQEVMVRGTPFCMMDLPAQEIINRLKKPPPVYRPVVPPEHAPPECLQLMKQCWAEAAEQRPTFDEIFNQFKTFNKGKKTNIIDSMLRMLEQYSSNLEDLIRERTEELEIEKQKTEKLLTQMLPPSVAESLKKGCTVEPEGFDLVTLYFSDIVGFTTISAMSEPIEVVDLLNDLYTLFDAIIGSHDVYKVETIGDAYMVASGLPKRNGSRHAAEIANMSLDILSSVGTFKMRHMPEVPVRIRIGLHSGPVVAGVVGLTMPRYCLFGDTVNTASRMESTGLPYRIHVSLSTVTILQNLSEGYEVELRGRTELKGKGTEETFWLIGKKGFMKPLPVPPPVDKDGQVGHGLQPVEIAAFQRRKAERQLVRNKP.

A signal peptide spans M1–T50. At L51–A467 the chain is on the extracellular side. A disulfide bridge links C104 with C132. A helical transmembrane segment spans residues F468–I490. Over R491 to P1108 the chain is Cytoplasmic. In terms of domain architecture, Protein kinase spans F532–F812. Residues T884–E1014 form the Guanylate cyclase domain.

It belongs to the adenylyl cyclase class-4/guanylyl cyclase family. As to quaternary structure, homodimer. Interacts with RD3; promotes the exit of GUCY2F from the endoplasmic reticulum and its trafficking to the photoreceptor outer segments. In terms of processing, there are 9 conserved cysteine residues in sensory guanylate cyclases, 6 in the extracellular domain, which may be involved in intra- or interchain disulfide bonds. As to expression, retina. Localized exclusively in the outer nuclear layer and inner segments of the rod and cone photoreceptor cells.

It is found in the photoreceptor outer segment membrane. The catalysed reaction is GTP = 3',5'-cyclic GMP + diphosphate. Its activity is regulated as follows. Activated by GUCA1B when free calcium ions concentration is low, and inhibited by GUCA1B when free calcium ions concentration is high. Inhibited by RD3. Responsible for the synthesis of cyclic GMP (cGMP) in rods and cones of photoreceptors. Plays an essential role in phototransduction, by mediating cGMP replenishment. May also participate in the trafficking of membrane-asociated proteins to the photoreceptor outer segment membrane. This chain is Retinal guanylyl cyclase 2 (GUCY2F), found in Homo sapiens (Human).